The chain runs to 295 residues: MVDSVYRTRSLGVAAEGLPDQYADGEAARVWQLYIGDTRSRTAEYKAWLLGLLRQHGCQRVLDVACGTGVDSIMLVEEGFSVTSVDASDKMLKYALKERWNRRHEPAFDKWVIEEANWMTLDKDVPQSAEGGFDAVICLGNSFAHLPDCKGDQSEHRLALKNIASMVRAGGLLVIDHRNYDHILSTGCAPPGKNIYYKSDLTKDVTTSVLIVNNKAHMVTLDYTVQVPGAGQDGSPGLSKFRLSYYPHCLASFTELLQAAFGGKCQHSVLGDFKPYKPGQTYIPCYFIHVLKRTD.

Val-2 bears the N-acetylvaline mark. (6S)-5-methyl-5,6,7,8-tetrahydrofolate-binding residues include Ser-4 and Tyr-6. A Phosphoserine modification is found at Ser-10. Residues Tyr-22, Trp-31, Tyr-34, and Arg-41 each coordinate S-adenosyl-L-methionine. Tyr-34 is modified (phosphotyrosine). N6-succinyllysine is present on Lys-46. S-adenosyl-L-methionine contacts are provided by residues Ala-65, 86–88 (DAS), 117–118 (NW), 139–142 (LGNS), and Arg-178. An N6-succinyllysine mark is found at Lys-193, Lys-198, and Lys-203. Residue His-217 participates in (6S)-5-methyl-5,6,7,8-tetrahydrofolate binding. Tyr-223 provides a ligand contact to S-adenosyl-L-methionine. (6S)-5-methyl-5,6,7,8-tetrahydrofolate is bound at residue Arg-242.

The protein belongs to the class I-like SAM-binding methyltransferase superfamily. Glycine N-methyltransferase family. Homotetramer. As to expression, expressed only in liver, pancreas, and prostate.

The protein resides in the cytoplasm. The catalysed reaction is glycine + S-adenosyl-L-methionine = sarcosine + S-adenosyl-L-homocysteine + H(+). With respect to regulation, inhibited by 5-methyltetrahydrofolate monoglutamate and by 5-methyltetrahydrofolate pentaglutamate, inhibition is much more effective by the pentaglutamate form than by the monoglutamate form. Two molecules of 5-methyltetrahydrofolate are bound per tetramer. The binding sites are localized between subunits. Inhibitor binding may preclude movements of the polypeptide chain that are necessary for enzyme activity. Its function is as follows. Catalyzes the methylation of glycine by using S-adenosylmethionine (AdoMet) to form N-methylglycine (sarcosine) with the concomitant production of S-adenosylhomocysteine (AdoHcy), a reaction regulated by the binding of 5-methyltetrahydrofolate. Plays an important role in the regulation of methyl group metabolism by regulating the ratio between S-adenosyl-L-methionine and S-adenosyl-L-homocysteine. The chain is Glycine N-methyltransferase from Homo sapiens (Human).